The following is a 458-amino-acid chain: Zinc finger protein 19 (458 aa).

The region spanning 14–85 (VTFEDVAVHF…EAQDDPPAER (72 aa)) is the KRAB domain. 9 consecutive C2H2-type zinc fingers follow at residues 161-183 (FICE…QRIH), 189-211 (FECS…QRIH), 217-239 (YQCE…QRIH), 245-267 (YYCT…QRIH), 273-295 (YECN…QKIH), 301-323 (YECN…QRIH), 329-351 (YSCK…QRIH), 357-379 (FDCV…LRIH), and 385-407 (YVCD…QRIH). The C2H2-type 10; atypical zinc finger occupies 413 to 433 (YECSKYEKAFGTSSQLGHLEH).

Belongs to the krueppel C2H2-type zinc-finger protein family.

Its subcellular location is the nucleus. Its function is as follows. May be involved in transcriptional regulation. The sequence is that of Zinc finger protein 19 (ZNF19) from Homo sapiens (Human).